The chain runs to 1124 residues: Anillin (1124 aa).

Met1 is subject to N-acetylmethionine. The span at Met1–Glu25 shows a compositional bias: basic and acidic residues. A required for ubiquitination region spans residues Met1 to Ser45. 2 disordered regions span residues Met1–Ile113 and Ala136–Val196. An interaction with CD2AP region spans residues Met1–Arg155. The nuclear localization stretch occupies residues Met1–Pro230. Phosphoserine is present on residues Ser54 and Ser72. The segment covering Val77–Cys96 has biased composition (polar residues). Phosphoserine occurs at positions 97 and 102. Residues Ser97–Gln108 are compositionally biased toward low complexity. The segment covering Lys148–Asn158 has biased composition (basic and acidic residues). A phosphoserine mark is found at Ser172 and Ser182. Thr194 bears the Phosphothreonine mark. 2 positions are modified to phosphoserine: Ser225 and Ser252. Residues Gly231 to Tyr676 are interaction with F-actin. Residue Lys254 forms a Glycyl lysine isopeptide (Lys-Gly) (interchain with G-Cter in SUMO1) linkage. Position 261 is a phosphoserine (Ser261). Polar residues predominate over residues Thr294 to Asp305. Residues Thr294–Gly328 form a disordered region. Residue Thr320 is modified to Phosphothreonine. 2 positions are modified to phosphoserine: Ser323 and Ser339. At Thr364 the chain carries Phosphothreonine. At Lys371 the chain carries N6-acetyllysine. The segment covering Arg380–Pro389 has biased composition (basic and acidic residues). Residues Arg380–Ile399 form a disordered region. A phosphothreonine mark is found at Thr397 and Thr401. Ser417, Ser419, Ser449, Ser485, Ser518, Ser553, and Ser561 each carry phosphoserine. The stretch at Phe569–Ile604 forms a coiled coil. 2 disordered regions span residues Asp579–Asp600 and Leu625–Ser664. Composition is skewed to basic and acidic residues over residues Leu631–Lys644 and Pro654–Ser664. Phosphoserine is present on residues Ser637, Ser642, Ser658, Ser661, and Ser664. The residue at position 671 (Tyr671) is a Phosphotyrosine. Phosphoserine is present on residues Ser678, Ser688, Ser792, and Ser927. The localization to the cleavage furrow stretch occupies residues Gln730–Pro1124. The 125-residue stretch at Ser983–Val1107 folds into the PH domain.

In terms of assembly, interacts with F-actin. Interacts with CD2AP. May interact with RHOA. Interacts with FZR1/CDH1 during mitotic exit. Post-translationally, phosphorylated during mitosis. In terms of processing, ubiquitinated, and this requires FZR1/CDH1. In terms of tissue distribution, ubiquitously expressed. Present at highest levels in the brain, at high levels in the placenta and testis, at intermediate levels in the intestine, ovary, skeletal muscle and thymus and at lower levels in heart, kidney, liver, lung, pancreas, prostate and spleen. In the kidney, it is widely expressed in tubules, but sparsely expressed in the glomerulus. Expression is significantly increased in renal biopsy specimens from idiopathic FSGS. Overexpressed in many tumor types including breast, colorectal, endometrial, hepatic, kidney, lung, ovarian and pancreatic tumors.

The protein resides in the nucleus. Its subcellular location is the cytoplasm. It localises to the cytoskeleton. The protein localises to the cell cortex. It is found in the cell projection. The protein resides in the bleb. In terms of biological role, required for cytokinesis. Essential for the structural integrity of the cleavage furrow and for completion of cleavage furrow ingression. Plays a role in bleb assembly during metaphase and anaphase of mitosis. May play a significant role in podocyte cell migration. This Homo sapiens (Human) protein is Anillin (ANLN).